The following is a 458-amino-acid chain: Histone acetyltransferase KAT8 (458 aa).

The span at 1–14 (MAAQGATAAVAATT) shows a compositional bias: low complexity. The tract at residues 1–52 (MAAQGATAAVAATTSGIVGEGEPGPGENTSVEGPARSPGRVSPPTPARGEPE) is disordered. The residue at position 2 (alanine 2) is an N-acetylalanine. Phosphoserine occurs at positions 37 and 42. The Tudor-knot domain maps to 55–110 (VEIGETYLCRRPDSTWHSAEVIQSRVNDQEGREEFYVHYVGFNRRLDEWVDKNRLA). Lysine 113 is modified (N6-acetyllysine). The Nuclear localization signal signature appears at 140–149 (RNQKRKHDEI). Residues 174 to 447 (TKVKYVDKIH…VDSVCLKWAP (274 aa)) form the MYST-type HAT domain. A sufficient for interaction with KANSL1 region spans residues 174-458 (TKVKYVDKIH…KHKQVKLSKK (285 aa)). Residues 207-232 (LWLCEYCLKYMKFEKSYRFHLGQCQW) form a C2HC MYST-type zinc finger. Cysteine 210, cysteine 213, histidine 226, and cysteine 230 together coordinate Zn(2+). N6-acetyllysine; by autocatalysis is present on lysine 274. Acetyl-CoA contacts are provided by isoleucine 317, threonine 319, arginine 325, arginine 326, glycine 327, glycine 329, and lysine 330. Position 348 is a phosphoserine (serine 348). The Proton donor/acceptor role is filled by glutamate 350. Residues serine 354, serine 363, tyrosine 408, and lysine 432 each contribute to the acetyl-CoA site.

This sequence belongs to the MYST (SAS/MOZ) family. As to quaternary structure, component of a multisubunit histone acetyltransferase complex (MSL) at least composed of the MOF/KAT8, MSL1/hampin, MSL2L1 and MSL3L1. Component of the NSL complex at least composed of MOF/KAT8, KANSL1, KANSL2, KANSL3, MCRS1, PHF20, OGT1/OGT, WDR5 and HCFC1. Component of some MLL1/MLL complex, at least composed of the core components KMT2A/MLL1, ASH2L, HCFC1, WDR5 and RBBP5, as well as the facultative components BACC1, CHD8, E2F6, HSP70, INO80C, KANSL1, LAS1L, MAX, MCRS1, MGA, MOF/KAT8, PELP1, PHF20, PRP31, RING2, RUVB1/TIP49A, RUVB2/TIP49B, SENP3, TAF1, TAF4, TAF6, TAF7, TAF9 and TEX10. Interacts with the chromodomain of MORF4L1/MRG15. Interacts with ATM (via its Tudor-knot domain); possibly regulating the activity of ATM. Interacts with NELFD. In terms of processing, acetylation at Lys-274 facilitates cognate substrate Lys-binding and acetylation. Although considered as an autoacetylation event, acetylation at Lys-274 probably takes place via a non-enzymatic process following acetyl-CoA-binding, which primes KAT8 for cognate protein-lysine acetylation. Deacetylated by SIRT1.

The protein resides in the nucleus. Its subcellular location is the chromosome. The protein localises to the mitochondrion. The enzyme catalyses L-lysyl-[histone] + acetyl-CoA = N(6)-acetyl-L-lysyl-[histone] + CoA + H(+). It carries out the reaction L-lysyl-[protein] + acetyl-CoA = N(6)-acetyl-L-lysyl-[protein] + CoA + H(+). It catalyses the reaction propanoyl-CoA + L-lysyl-[protein] = N(6)-propanoyl-L-lysyl-[protein] + CoA + H(+). Its activity is regulated as follows. The acetyltransferase activity is inhibited by anacardic acid derivatives. In terms of biological role, histone acetyltransferase that catalyzes histone H4 acetylation at 'Lys-5'- and 'Lys-8' (H4K5ac and H4K8ac) or 'Lys-16' (H4K16ac), depending on the context. Catalytic component of the MSL histone acetyltransferase complex, a multiprotein complex that mediates the majority of histone H4 acetylation at 'Lys-16' (H4K16ac), an epigenetic mark that prevents chromatin compaction. H4K16ac constitutes the only acetylation mark intergenerationally transmitted and regulates key biological processes, such as oogenesis, embryonic stem cell pluripotency, hematopoiesis or glucose metabolism. The MSL complex is required for chromosome stability and genome integrity by maintaining homeostatic levels of H4K16ac. The MSL complex is also involved in gene dosage by promoting up-regulation of genes expressed by the X chromosome. X up-regulation is required to compensate for autosomal biallelic expression. The MSL complex also participates in gene dosage compensation by promoting expression of Tsix non-coding RNA. As part of the NSL histone acetyltransferase complex, catalyzes histone H4 acetylation at 'Lys-5'- and 'Lys-8' (H4K5ac and H4K8ac) at transcription start sites and promotes transcription initiation. The NSL complex also acts as a regulator of gene expression in mitochondria: KAT8 associates with mitochondrial DNA and controls expression of respiratory genes in an acetyltransferase-dependent mechanism. Also functions as an acetyltransferase for non-histone targets, such as ALKBH5, COX17, IRF3, KDM1A/LSD1, LMNA, PAX7 or TP53/p53. Acts as an inhibitor of antiviral immunity by acetylating IRF3, preventing IRF3 recruitment to promoters. Acts as a regulator of asymmetric division in muscle stem cells by mediating acetylation of PAX7. As part of the NSL complex, acetylates TP53/p53 at 'Lys-120'. Acts as a regulator of epithelial-to-mesenchymal transition as part of the NSL complex by mediating acetylation of KDM1A/LSD1. The NSL complex is required for nuclear architecture maintenance by mediating acetylation of LMNA. Promotes mitochondrial integrity by catalyzing acetylation of COX17. In addition to protein acetyltransferase activity, able to mediate protein propionylation. The protein is Histone acetyltransferase KAT8 (Kat8) of Rattus norvegicus (Rat).